The chain runs to 302 residues: Acetylglutamate kinase (302 aa).

Substrate-binding positions include 68–69 (GG), Arg-90, and Asn-194.

The protein belongs to the acetylglutamate kinase family. ArgB subfamily.

It localises to the cytoplasm. The catalysed reaction is N-acetyl-L-glutamate + ATP = N-acetyl-L-glutamyl 5-phosphate + ADP. It participates in amino-acid biosynthesis; L-arginine biosynthesis; N(2)-acetyl-L-ornithine from L-glutamate: step 2/4. Its function is as follows. Catalyzes the ATP-dependent phosphorylation of N-acetyl-L-glutamate. The sequence is that of Acetylglutamate kinase from Acinetobacter baumannii (strain AB307-0294).